A 424-amino-acid chain; its full sequence is UDP-sugar transporter protein SLC35A5 (424 aa).

Topologically, residues 1–8 (MEKQCCSH) are cytoplasmic. The helical transmembrane segment at 9–29 (PVICSLSTMYTFLLGAIFIAL) threads the bilayer. Over 30–53 (SSSRILLVKYSANEENKYDYLPTT) the chain is Lumenal. The chain crosses the membrane as a helical span at residues 54-74 (ANVCSELVKLVFCVLVSFCVI). The Cytoplasmic portion of the chain corresponds to 75-93 (KKDHQSRNLKYASWKEFSN). The chain crosses the membrane as a helical span at residues 94 to 116 (FMKWSIPAFLYFLDNLIVFYVLS). The Lumenal portion of the chain corresponds to 117–119 (YLQ). Residues 120–142 (PAMAVIFSNFSIITTALLFRIVL) form a helical membrane-spanning segment. Residues 143 to 147 (KRRLN) are Cytoplasmic-facing. Residues 148-168 (WIQWASLLILFLSIVALTAGT) form a helical membrane-spanning segment. Residues 169-228 (KTLQHNLAGHGFHHDAFFSPSNSCLLFRSECPRKDNCTAKEWTFPEAKWNTTARVFSHIR) lie on the Lumenal side of the membrane. N204 carries an N-linked (GlcNAc...) asparagine glycan. A helical membrane pass occupies residues 229 to 249 (LGMGHVLIIVQCFISSMANIY). Over 250-263 (NEKILKEGNQLAES) the chain is Cytoplasmic. A helical transmembrane segment spans residues 264-284 (IFIQNSKLYFFGILFNGLTLG). Residues 285–303 (LQRSNRDQIKNCGFFYGHN) lie on the Lumenal side of the membrane. The chain crosses the membrane as a helical span at residues 304–324 (AFSVALIFVTAFQGLSVAFIL). Over 325–330 (KFLDNM) the chain is Cytoplasmic. A helical transmembrane segment spans residues 331 to 351 (FHVLMAQVTTVIITTVSVLVF). The Lumenal segment spans residues 352–354 (DFR). A helical transmembrane segment spans residues 355-375 (PSLEFFLEAPSVLLSIFIYNA). The Cytoplasmic portion of the chain corresponds to 376–424 (SKPQGPEYAPRQERIRDLSGNLWERSSGDGEELERLTKPKSDESDEDTF). S394, S416, and S419 each carry phosphoserine. Positions 395–424 (GNLWERSSGDGEELERLTKPKSDESDEDTF) are disordered. Over residues 408–417 (LERLTKPKSD) the composition is skewed to basic and acidic residues.

The protein belongs to the nucleotide-sugar transporter family. SLC35A subfamily. Probably forms homooligomers and heterooligomers with SLC35A1, SLC35A2, SLC35A3 and SLC35A4.

Its subcellular location is the golgi apparatus membrane. It carries out the reaction UMP(out) + UDP-alpha-D-glucuronate(in) = UMP(in) + UDP-alpha-D-glucuronate(out). The catalysed reaction is UMP(out) + UDP-N-acetyl-alpha-D-glucosamine(in) = UMP(in) + UDP-N-acetyl-alpha-D-glucosamine(out). The enzyme catalyses UDP-N-acetyl-alpha-D-galactosamine(in) + UMP(out) = UDP-N-acetyl-alpha-D-galactosamine(out) + UMP(in). Probable UDP-sugar:UMP transmembrane antiporter involved in UDP-alpha-D-glucuronate/UDP-GlcA, UDP-GlcNAc/UDP-N-acetyl-alpha-D-glucosamine and UDP-N-acetyl-alpha-D-galactosamine/UDP-GalNAc transport from the cytosol to the lumen of the Golgi. The sequence is that of UDP-sugar transporter protein SLC35A5 from Pongo abelii (Sumatran orangutan).